The sequence spans 625 residues: MVKGEKRSEMMLNLFGDNSEEEEIESEHECNRRQPNYASDEAEGGVEPEGEGEAEVEVHGEAEAESDGEQGDVELDPGESEGEREQSSQEADPQEESEARDSDSDNKEEEHGGRVAKKRRQEVVESGSERSGEKHYESEDEEVDQTRSPRSPSEEKEEVQVAQSDVNIRNVFGSSDDEDAEEYVRNDVEQDEHRSPIEDEEGSEKDLRPDDMVLDDIIPEEDPQYESEAEHVEARYRERPVGPPLEVEVPFRPPPGDPVKMNMIKVSNIMGIDPKPFDAKTFVEEDTFMTDEPGAKNRIRLDNNIVRHRFVKSRDGKTYSESNARFVRWSDGSLQLLIGNEVLNITEQDAKEDQNHLFIKHEKGILQSQGRILKKMRFTPSSLTSNSHRLLTAIVESRQKKAFKVKNCVTDIDPEREKEKREKAESQNLKASTKLSQAREKIKRKYPLPVERRQLSTGYLEDALDEDDEDYRSNRGYEEDLEAEAQRERRILNAKKSHKGIPGRSSMTSARPSRRQMEYSESEREESEYETEEEEEEKSPARGRGKDSEDEYEEDAEEDEEERGKSNRYSDEDEEEEEVAGGRAEKDHRGSGRKRKGIESDEEESPPRKAPTHRRKAVIDDSDED.

2 disordered regions span residues 1–214 (MVKG…DMVL) and 415–625 (EREK…SDED). Composition is skewed to acidic residues over residues 40–55 (DEAEGGVEPEGEGEAE) and 63–80 (EAESDGEQGDVELDPGES). 3 stretches are compositionally biased toward basic and acidic residues: residues 97-113 (SEARDSDSDNKEEEHGG), 121-137 (QEVVESGSERSGEKHYE), and 182-197 (EYVRNDVEQDEHRSPI). At S203 the chain carries Phosphoserine. Positions 415 to 425 (EREKEKREKAE) are enriched in basic and acidic residues. Residues 415 to 539 (EREKEKREKA…ETEEEEEEKS (125 aa)) are a coiled coil. Over residues 426-436 (SQNLKASTKLS) the composition is skewed to polar residues. Positions 471-491 (YRSNRGYEEDLEAEAQRERRI) are enriched in basic and acidic residues. Residues 492–501 (LNAKKSHKGI) are compositionally biased toward basic residues. A compositionally biased stretch (acidic residues) spans 523–537 (EREESEYETEEEEEE). Basic and acidic residues predominate over residues 538 to 547 (KSPARGRGKD). 5 positions are modified to phosphoserine: S548, S570, S600, S605, and S622. Positions 548–561 (SEDEYEEDAEEDEE) are enriched in acidic residues.

This sequence belongs to the LEO1 family. In terms of assembly, component of the nuclear PAF1 complex (PAF1C), which consists of VIP2/ELF7/PAF1, VIP3/SKI8/WDR61, VIP4/LEO1, VIP5/RTF1, VIP6/ELF8/CTR9 and CDC73. Interacts with VIP3 and VIP6. As to expression, expressed in roots, shoot apices, stems, cauline leaves, inflorescence apices and flowers.

The protein resides in the nucleus. Component of the PAF1 complex (PAF1C) which is involved in histone modifications such as methylation on histone H3 'Lys-4' (H3K4me3). Involved in regulation of flowering time. Required for the expression of the flowering repressor and MADS box gene FLC. Involved in the control of seed dormancy and germination. The sequence is that of Protein LEO1 homolog from Arabidopsis thaliana (Mouse-ear cress).